The sequence spans 453 residues: Ribosomal protein uS12 methylthiotransferase RimO (453 aa).

The region spanning 9–124 (PKVGFVSLGC…VMEAVHTHLP (116 aa)) is the MTTase N-terminal domain. The [4Fe-4S] cluster site is built by Cys-18, Cys-54, Cys-83, Cys-155, Cys-159, and Cys-162. Residues 141–382 (LTPKHYAYLK…MEVAERVSAR (242 aa)) form the Radical SAM core domain. One can recognise a TRAM domain in the interval 385 to 453 (QRKVGKTLRV…ADGHDLWGEV (69 aa)).

The protein belongs to the methylthiotransferase family. RimO subfamily. Requires [4Fe-4S] cluster as cofactor.

Its subcellular location is the cytoplasm. It carries out the reaction L-aspartate(89)-[ribosomal protein uS12]-hydrogen + (sulfur carrier)-SH + AH2 + 2 S-adenosyl-L-methionine = 3-methylsulfanyl-L-aspartate(89)-[ribosomal protein uS12]-hydrogen + (sulfur carrier)-H + 5'-deoxyadenosine + L-methionine + A + S-adenosyl-L-homocysteine + 2 H(+). Its function is as follows. Catalyzes the methylthiolation of an aspartic acid residue of ribosomal protein uS12. The polypeptide is Ribosomal protein uS12 methylthiotransferase RimO (Ralstonia nicotianae (strain ATCC BAA-1114 / GMI1000) (Ralstonia solanacearum)).